An 86-amino-acid polypeptide reads, in one-letter code: Large ribosomal subunit protein uL24c (86 aa).

It belongs to the universal ribosomal protein uL24 family. In terms of assembly, part of the 50S ribosomal subunit.

The protein resides in the plastid. It is found in the chloroplast. One of two assembly initiator proteins, it binds directly to the 5'-end of the 23S rRNA, where it nucleates assembly of the 50S subunit. This chain is Large ribosomal subunit protein uL24c (rpl24), found in Heterosigma akashiwo (strain NIES-293 / 8280G21-1).